We begin with the raw amino-acid sequence, 673 residues long: Polygalacturonate 4-alpha-galacturonosyltransferase (673 aa).

The Cytoplasmic portion of the chain corresponds to 1 to 22; it reads MALKRGLSGVNRIRGSGGGSRS. A helical; Signal-anchor for type II membrane protein transmembrane segment spans residues 23–43; it reads VLVLLIFFCVFAPLCFFVGRG. The Lumenal segment spans residues 44–673; that stretch reads VYIDSSNDYS…PYLRRCNLHE (630 aa). Residue N103 is glycosylated (N-linked (GlcNAc...) asparagine). Residues 112–136 form a disordered region; that stretch reads GVDPSFRHSENPATPDVKSNNLNEK. N-linked (GlcNAc...) asparagine glycosylation is found at N382, N434, N538, and N585.

The protein belongs to the glycosyltransferase 8 family. In terms of tissue distribution, expressed in seedlings, inflorescences, flowers, siliques, pollen, roots, stems and leaves.

It is found in the golgi apparatus membrane. It catalyses the reaction [(1-&gt;4)-alpha-D-galacturonosyl](n) + UDP-alpha-D-galacturonate = [(1-&gt;4)-alpha-D-galacturonosyl](n+1) + UDP + H(+). Its pathway is glycan metabolism; pectin biosynthesis. Involved in pectin biosynthesis. Catalyzes the transfer of galacturonic acid from uridine 5'-diphosphogalacturonic acid onto the pectic polysaccharide homogalacturonan. The chain is Polygalacturonate 4-alpha-galacturonosyltransferase (GAUT1) from Arabidopsis thaliana (Mouse-ear cress).